The sequence spans 199 residues: MPADFALTNLTNHFLIAMPGLQDEIFSRSVVYVCEHSQRGALGLVINKPCDIDMKRLFEKVELPMCRADLSNTPVFLGGPVQTERGFVLHEATFADADKPAESVYASTMVIPGGLEMTTSKDVLEAISIGAGPRKVLVSLGYAAWGEGQLESEISENSWLTVAANNSVIFDTPVAQRYEQALLLLGLELWMLSPDAGHA.

Belongs to the UPF0301 (AlgH) family.

The polypeptide is UPF0301 protein Rfer_1377 (Albidiferax ferrireducens (strain ATCC BAA-621 / DSM 15236 / T118) (Rhodoferax ferrireducens)).